Reading from the N-terminus, the 996-residue chain is P3N-PIPO polyprotein (996 aa).

One can recognise a Peptidase S30 domain in the interval 173–313; the sequence is VVRSASVNNL…VFFYDDVDHY (141 aa). Catalysis depends on for P1 proteinase activity residues histidine 226, glutamate 235, and serine 267. An Involved in interaction with stylet and aphid transmission motif is present at residues 365 to 368; it reads KLSC. Residues 621–623 carry the Involved in virions binding and aphid transmission motif; that stretch reads PTK. A Peptidase C6 domain is found at 647-769; that stretch reads MYIAKEGYCY…QSEMKHYRVG (123 aa). Residues cysteine 655 and histidine 728 each act as for helper component proteinase activity in the active site.

This sequence belongs to the potyviridae P3N-PIPO polyprotein family. Interacts (via PIPO domain) with host PCaP1 protein; this interaction may help to anchor the movement complex to the plasma membrane from which the complex could move to the plasmodesmata. Post-translationally, potyviral RNA is expressed as two polyproteins which undergo post-translational proteolytic processing. Genome polyprotein is processed by NIa-pro, P1 and HC-pro proteinases resulting in the production of at least ten individual proteins. P3N-PIPO is cleaved by P1 and HC-pro proteinases resulting in the production of three individual proteins. The P1 proteinase and the HC-pro cleave only their respective C-termini autocatalytically.

Its subcellular location is the host cell junction. It is found in the host plasmodesma. It catalyses the reaction Hydrolyzes a Gly-|-Gly bond at its own C-terminus, commonly in the sequence -Tyr-Xaa-Val-Gly-|-Gly, in the processing of the potyviral polyprotein.. Required for aphid transmission and also has proteolytic activity. Only cleaves a Gly-Gly dipeptide at its own C-terminus. Interacts with virions and aphid stylets. Acts as a suppressor of RNA-mediated gene silencing, also known as post-transcriptional gene silencing (PTGS), a mechanism of plant viral defense that limits the accumulation of viral RNAs. May have RNA-binding activity. Functionally, allows efficient cell to cell propagation, by bypassing the host cell wall barrier. Transports viral genome to neighboring plant cells directly through plasmosdesmata, without any budding. This chain is P3N-PIPO polyprotein, found in Zucchini yellow mosaic virus (strain Reunion Island) (ZYMV).